Reading from the N-terminus, the 468-residue chain is Dihydrolipoyl dehydrogenase (468 aa).

Residues E39–C47, K56, and A119 each bind FAD. C47 and C52 form a disulfide bridge. NAD(+)-binding positions include G183–I187, E206, and T271–R274. The FAD site is built by D314 and A322. H446 acts as the Proton acceptor in catalysis.

The protein belongs to the class-I pyridine nucleotide-disulfide oxidoreductase family. Homodimer. It depends on FAD as a cofactor.

The protein resides in the cytoplasm. It localises to the membrane. It carries out the reaction N(6)-[(R)-dihydrolipoyl]-L-lysyl-[protein] + NAD(+) = N(6)-[(R)-lipoyl]-L-lysyl-[protein] + NADH + H(+). In terms of biological role, lipoamide dehydrogenase is a component of the alpha-ketoacid dehydrogenase complexes. The chain is Dihydrolipoyl dehydrogenase (pdhD) from Staphylococcus aureus (strain COL).